Consider the following 154-residue polypeptide: MANQDDKIKIITDNRQARHLYEILETFEAGVQLLGTEVKSVRAGKVNLRDGYVLVRNGEAVLINVHISPYEQSSEYFNHDPRRTRKLLMHKKEISKLIGQVEQKGLTLVPLKMYFKGSWVKISIGLGRGKKLHDKREDLKRRQDQRDMARAMKR.

Residues 135 to 154 (KREDLKRRQDQRDMARAMKR) form a disordered region.

It belongs to the SmpB family.

It localises to the cytoplasm. Its function is as follows. Required for rescue of stalled ribosomes mediated by trans-translation. Binds to transfer-messenger RNA (tmRNA), required for stable association of tmRNA with ribosomes. tmRNA and SmpB together mimic tRNA shape, replacing the anticodon stem-loop with SmpB. tmRNA is encoded by the ssrA gene; the 2 termini fold to resemble tRNA(Ala) and it encodes a 'tag peptide', a short internal open reading frame. During trans-translation Ala-aminoacylated tmRNA acts like a tRNA, entering the A-site of stalled ribosomes, displacing the stalled mRNA. The ribosome then switches to translate the ORF on the tmRNA; the nascent peptide is terminated with the 'tag peptide' encoded by the tmRNA and targeted for degradation. The ribosome is freed to recommence translation, which seems to be the essential function of trans-translation. The chain is SsrA-binding protein from Microcystis aeruginosa (strain NIES-843 / IAM M-2473).